The chain runs to 767 residues: U3 small nucleolar RNA-associated protein 14 homolog A (767 aa).

The disordered stretch occupies residues 23–49 (TSNYPLSASEDEGDSDGERKHQKLLEA). 6 positions are modified to phosphoserine: serine 29, serine 31, serine 37, serine 52, serine 77, and serine 81. Lysine 122 participates in a covalent cross-link: Glycyl lysine isopeptide (Lys-Gly) (interchain with G-Cter in SUMO2). Phosphothreonine is present on threonine 205. A coiled-coil region spans residues 317–346 (LEARQAMQEQLAKNKELTQKLQVVSESEEE). The tract at residues 338–554 (QVVSESEEEG…SKGKNKKEQM (217 aa)) is disordered. The segment covering 342-355 (ESEEEGGADEEEAL) has biased composition (acidic residues). Positions 398–433 (AAHEFPENEENDKPVAEEDELLKELEKRRSLRKRSE) are enriched in basic and acidic residues. At arginine 431 the chain carries Citrulline. Lysine 447 is covalently cross-linked (Glycyl lysine isopeptide (Lys-Gly) (interchain with G-Cter in SUMO2)). Serine 451 bears the Phosphoserine mark. Over residues 486 to 498 (VWEEEPAPEEDEP) the composition is skewed to acidic residues. Residues 503–538 (RPERMRTLEELEELGKEDSLPNKERPRPSVEGEQVR) show a composition bias toward basic and acidic residues. Lysine 518 participates in a covalent cross-link: Glycyl lysine isopeptide (Lys-Gly) (interchain with G-Cter in SUMO2). Arginine 586 bears the Citrulline mark. Positions 730–767 (TAEDVDCRSSPRSDVPVMQSNPKQHSKHQKQRKKSSIG) are disordered. The span at 753 to 767 (QHSKHQKQRKKSSIG) shows a compositional bias: basic residues.

The protein belongs to the UTP14 family. As to quaternary structure, interacts with DHX37. In terms of processing, citrullinated by PADI4. As to expression, ubiquitously expressed.

The protein localises to the nucleus. Its subcellular location is the nucleolus. Functionally, may be required for ribosome biogenesis. This is U3 small nucleolar RNA-associated protein 14 homolog A (Utp14a) from Mus musculus (Mouse).